The sequence spans 601 residues: Testis-specific gene 10 protein (601 aa).

Positions 1-10 are enriched in basic residues; it reads MMRSRSKSPR. Disordered regions lie at residues 1–20 and 563–588; these read MMRS…RGAN and VSST…DRGL. The interaction with HIF1A stretch occupies residues 459-592; sequence QMTNERISMQ…SPDRGLDRSL (134 aa). Residues 563 to 573 show a composition bias toward polar residues; that stretch reads VSSTMKPNTKC. The segment covering 574 to 588 has biased composition (basic and acidic residues); the sequence is HSPERAHHRSPDRGL. S591 carries the phosphoserine modification.

It belongs to the CEP135/TSGA10 family. As to quaternary structure, interacts with HIF1A. In terms of processing, processed into N-terminal 27-kDa and C-terminal 55-kDa fragments.

Its subcellular location is the cytoplasm. It localises to the cytoskeleton. The protein localises to the microtubule organizing center. The protein resides in the centrosome. It is found in the centriole. Plays a role in spermatogenesis. When overexpressed, prevents nuclear localization of HIF1A. The sequence is that of Testis-specific gene 10 protein (TSGA10) from Macaca fascicularis (Crab-eating macaque).